The sequence spans 310 residues: Proline iminopeptidase (310 aa).

The AB hydrolase-1 domain occupies 33–290 (PVIFLHGGPG…RVVQAGHRAF (258 aa)). Ser-107 functions as the Nucleophile in the catalytic mechanism. Residue Asp-260 is part of the active site. His-287 functions as the Proton donor in the catalytic mechanism.

It belongs to the peptidase S33 family.

It localises to the cytoplasm. It catalyses the reaction Release of N-terminal proline from a peptide.. Its function is as follows. Specifically catalyzes the removal of N-terminal proline residues from peptides. The protein is Proline iminopeptidase (pip) of Neisseria meningitidis serogroup A / serotype 4A (strain DSM 15465 / Z2491).